We begin with the raw amino-acid sequence, 436 residues long: 3-ketoacyl-CoA thiolase (436 aa).

Catalysis depends on cysteine 99, which acts as the Acyl-thioester intermediate. Catalysis depends on proton acceptor residues histidine 392 and cysteine 422.

Belongs to the thiolase-like superfamily. Thiolase family. Heterotetramer of two alpha chains (FadJ) and two beta chains (FadI).

The protein resides in the cytoplasm. The enzyme catalyses an acyl-CoA + acetyl-CoA = a 3-oxoacyl-CoA + CoA. It functions in the pathway lipid metabolism; fatty acid beta-oxidation. Its function is as follows. Catalyzes the final step of fatty acid oxidation in which acetyl-CoA is released and the CoA ester of a fatty acid two carbons shorter is formed. The sequence is that of 3-ketoacyl-CoA thiolase from Shewanella pealeana (strain ATCC 700345 / ANG-SQ1).